Here is a 194-residue protein sequence, read N- to C-terminus: Xanthine phosphoribosyltransferase (194 aa).

Positions 20 and 27 each coordinate xanthine. 128-132 (ANGQA) contacts 5-phospho-alpha-D-ribose 1-diphosphate. Xanthine is bound at residue lysine 156.

It belongs to the purine/pyrimidine phosphoribosyltransferase family. Xpt subfamily. In terms of assembly, homodimer.

Its subcellular location is the cytoplasm. The enzyme catalyses XMP + diphosphate = xanthine + 5-phospho-alpha-D-ribose 1-diphosphate. It functions in the pathway purine metabolism; XMP biosynthesis via salvage pathway; XMP from xanthine: step 1/1. Converts the preformed base xanthine, a product of nucleic acid breakdown, to xanthosine 5'-monophosphate (XMP), so it can be reused for RNA or DNA synthesis. This is Xanthine phosphoribosyltransferase from Oceanobacillus iheyensis (strain DSM 14371 / CIP 107618 / JCM 11309 / KCTC 3954 / HTE831).